Reading from the N-terminus, the 309-residue chain is Taste receptor type 2 member 20 (309 aa).

The Extracellular portion of the chain corresponds to 1 to 6 (MMSFLH). Residues 7 to 27 (IVFSILVVVAFILGNFANGFI) form a helical membrane-spanning segment. Over 28-46 (ALINFIAWVKRQKISSADQ) the chain is Cytoplasmic. The chain crosses the membrane as a helical span at residues 47–67 (IIAALAVSRVGLLWVILLHWY). At 68 to 79 (STVLNPTSSNLK) the chain is on the extracellular side. A helical transmembrane segment spans residues 80–100 (VIIFISNAWAVTNHFSIWLAT). Over 101–125 (SLSIFYLLKIVNFSRLIFHHLKRKA) the chain is Cytoplasmic. A helical membrane pass occupies residues 126-146 (KSVVLVIVLGSLFFLVCXLVM). Over 147 to 178 (KNTYINVWTEECEGNVTWKIKLRNAMHLSNLT) the chain is Extracellular. The chain crosses the membrane as a helical span at residues 179–199 (VAMLANLIPFTLTLISFLLLI). At 200 to 229 (YSLCKHLKKMQLHGKGSQDPSTKIHIKALQ) the chain is on the cytoplasmic side. The chain crosses the membrane as a helical span at residues 230–250 (TVTSFLILLAIYFLCLITSFW). Residues 251-259 (NSKMRPKEI) are Extracellular-facing. A helical membrane pass occupies residues 260 to 280 (VLMLCQAFGIIYPSFHSFILI). Topologically, residues 281 to 309 (WGNKTLKQTFLSVLWQVTCWAKGQNQSTP) are cytoplasmic.

Belongs to the G-protein coupled receptor T2R family.

Its subcellular location is the membrane. Receptor that may play a role in the perception of bitterness and is gustducin-linked. May play a role in sensing the chemical composition of the gastrointestinal content. The activity of this receptor may stimulate alpha gustducin, mediate PLC-beta-2 activation and lead to the gating of TRPM5. The sequence is that of Taste receptor type 2 member 20 (TAS2R20) from Pan troglodytes (Chimpanzee).